Consider the following 83-residue polypeptide: Short neurotoxin NCA-02/NCA-05/UER-05 (83 aa).

An N-terminal signal peptide occupies residues 1 to 21 (MKTLLLTLVVVTMVCLDLGYT). Intrachain disulfides connect Cys24-Cys45, Cys38-Cys62, Cys64-Cys75, and Cys76-Cys81.

This sequence belongs to the three-finger toxin family. Short-chain subfamily. Type I alpha-neurotoxin sub-subfamily. In terms of tissue distribution, expressed by the venom gland.

It is found in the secreted. In terms of biological role, binds to muscle nicotinic acetylcholine receptor (nAChR) and inhibit acetylcholine from binding to the receptor, thereby impairing neuromuscular transmission. This is Short neurotoxin NCA-02/NCA-05/UER-05 from Laticauda colubrina (Yellow-lipped sea krait).